The primary structure comprises 357 residues: Golgi to ER traffic protein 2 (357 aa).

At methionine 1–leucine 224 the chain is on the cytoplasmic side. Residues threonine 65 to serine 81 are compositionally biased toward low complexity. The disordered stretch occupies residues threonine 65–serine 99. A compositionally biased stretch (polar residues) spans threonine 88–isoleucine 98. The helical transmembrane segment at tryptophan 225–phenylalanine 245 threads the bilayer. The Lumenal portion of the chain corresponds to isoleucine 246–glycine 270. The helical transmembrane segment at phenylalanine 271–phenylalanine 290 threads the bilayer. Residues threonine 291 to glutamate 334 lie on the Cytoplasmic side of the membrane. The chain crosses the membrane as a helical span at residues leucine 335–phenylalanine 355. Over serine 356 to asparagine 357 the chain is Lumenal.

The protein belongs to the GET2 family. Component of the Golgi to ER traffic (GET) complex, which is composed of GET1, GET2 and GET3. Within the complex, GET1 and GET2 form a heterotetramer which is stabilized by phosphatidylinositol binding and which binds to the GET3 homodimer.

The protein localises to the endoplasmic reticulum membrane. It localises to the golgi apparatus membrane. Required for the post-translational delivery of tail-anchored (TA) proteins to the endoplasmic reticulum. Together with GET1, acts as a membrane receptor for soluble GET3, which recognizes and selectively binds the transmembrane domain of TA proteins in the cytosol. The GET complex cooperates with the HDEL receptor ERD2 to mediate the ATP-dependent retrieval of resident ER proteins that contain a C-terminal H-D-E-L retention signal from the Golgi to the ER. The protein is Golgi to ER traffic protein 2 of Lodderomyces elongisporus (strain ATCC 11503 / CBS 2605 / JCM 1781 / NBRC 1676 / NRRL YB-4239) (Yeast).